A 407-amino-acid chain; its full sequence is Peptidase T (407 aa).

His-82 is a binding site for Zn(2+). Asp-84 is a catalytic residue. Asp-143 contacts Zn(2+). Glu-177 functions as the Proton acceptor in the catalytic mechanism. The Zn(2+) site is built by Glu-178, Asp-200, and His-382.

Belongs to the peptidase M20B family. Requires Zn(2+) as cofactor.

Its subcellular location is the cytoplasm. It carries out the reaction Release of the N-terminal residue from a tripeptide.. In terms of biological role, cleaves the N-terminal amino acid of tripeptides. This is Peptidase T from Streptococcus pyogenes serotype M18 (strain MGAS8232).